Consider the following 89-residue polypeptide: Translation initiation factor IF-1, chloroplastic (89 aa).

The 72-residue stretch at 1 to 72 (MKKQDLIDME…TKGRIIYRLR (72 aa)) folds into the S1-like domain.

Belongs to the IF-1 family. In terms of assembly, component of the 30S ribosomal translation pre-initiation complex which assembles on the 30S ribosome in the order IF-2 and IF-3, IF-1 and N-formylmethionyl-tRNA(fMet); mRNA recruitment can occur at any time during PIC assembly.

It is found in the plastid. Its subcellular location is the chloroplast. Its function is as follows. One of the essential components for the initiation of protein synthesis. Stabilizes the binding of IF-2 and IF-3 on the 30S subunit to which N-formylmethionyl-tRNA(fMet) subsequently binds. Helps modulate mRNA selection, yielding the 30S pre-initiation complex (PIC). Upon addition of the 50S ribosomal subunit IF-1, IF-2 and IF-3 are released leaving the mature 70S translation initiation complex. This chain is Translation initiation factor IF-1, chloroplastic, found in Angiopteris evecta (Mule's foot fern).